The primary structure comprises 226 residues: Small ribosomal subunit protein uS2c (226 aa).

Belongs to the universal ribosomal protein uS2 family.

The protein localises to the plastid. Its subcellular location is the chloroplast. This is Small ribosomal subunit protein uS2c (rps2) from Phaeodactylum tricornutum (strain CCAP 1055/1).